The sequence spans 306 residues: Acetyl-coenzyme A carboxylase carboxyl transferase subunit beta (306 aa).

The CoA carboxyltransferase N-terminal domain maps to 25–294; the sequence is LWIKDPTSGE…AVNPSNPSPT (270 aa). The segment at 286 to 306 is disordered; sequence VNPSNPSPTDSQPPLSKAEAA. The span at 287–299 shows a compositional bias: polar residues; it reads NPSNPSPTDSQPP.

It belongs to the AccD/PCCB family. In terms of assembly, acetyl-CoA carboxylase is a heterohexamer composed of biotin carboxyl carrier protein (AccB), biotin carboxylase (AccC) and two subunits each of ACCase subunit alpha (AccA) and ACCase subunit beta (AccD).

It is found in the cytoplasm. The enzyme catalyses N(6)-carboxybiotinyl-L-lysyl-[protein] + acetyl-CoA = N(6)-biotinyl-L-lysyl-[protein] + malonyl-CoA. The protein operates within lipid metabolism; malonyl-CoA biosynthesis; malonyl-CoA from acetyl-CoA: step 1/1. In terms of biological role, component of the acetyl coenzyme A carboxylase (ACC) complex. Biotin carboxylase (BC) catalyzes the carboxylation of biotin on its carrier protein (BCCP) and then the CO(2) group is transferred by the transcarboxylase to acetyl-CoA to form malonyl-CoA. The polypeptide is Acetyl-coenzyme A carboxylase carboxyl transferase subunit beta (Bartonella quintana (strain Toulouse) (Rochalimaea quintana)).